Reading from the N-terminus, the 246-residue chain is 1-(5-phosphoribosyl)-5-[(5-phosphoribosylamino)methylideneamino] imidazole-4-carboxamide isomerase (246 aa).

Asp8 functions as the Proton acceptor in the catalytic mechanism. Asp130 serves as the catalytic Proton donor.

The protein belongs to the HisA/HisF family.

The protein resides in the cytoplasm. The enzyme catalyses 1-(5-phospho-beta-D-ribosyl)-5-[(5-phospho-beta-D-ribosylamino)methylideneamino]imidazole-4-carboxamide = 5-[(5-phospho-1-deoxy-D-ribulos-1-ylimino)methylamino]-1-(5-phospho-beta-D-ribosyl)imidazole-4-carboxamide. It participates in amino-acid biosynthesis; L-histidine biosynthesis; L-histidine from 5-phospho-alpha-D-ribose 1-diphosphate: step 4/9. The polypeptide is 1-(5-phosphoribosyl)-5-[(5-phosphoribosylamino)methylideneamino] imidazole-4-carboxamide isomerase (Shigella sonnei (strain Ss046)).